The sequence spans 1244 residues: Ras-specific guanine nucleotide-releasing factor 1 (1244 aa).

Residues 22-129 (DGTRKGYLSK…WVAAIARASY (108 aa)) form the PH 1 domain. A Phosphoserine; by PLK2 modification is found at Ser-71. In terms of domain architecture, IQ spans 204 to 229 (KKIKKVQSFLRGWLCRRKWKNIIQDY). The DH domain occupies 240-426 (KRNQVVFSML…EELSRVMHDE (187 aa)). Residues 456 to 582 (TFVRQGSLIQ…WTSDIIQCVD (127 aa)) form the PH 2 domain. A phosphoserine; by PLK2 mark is found at Ser-575 and Ser-611. One can recognise an N-terminal Ras-GEF domain in the interval 629–743 (KVLQIRYASV…RRRKLSLNIP (115 aa)). The segment at 707–730 (GDAPKSPRASRKFSSPPPLAIGTS) is disordered. The residue at position 739 (Ser-739) is a Phosphoserine. Phosphoserine; by PLK2 is present on residues Ser-760 and Ser-781. Residues 800 to 840 (TLEESSGFRKPTSDILKEESDDDQSDVDDTEVSPPTPKSFR) are disordered. Over residues 818 to 830 (ESDDDQSDVDDTE) the composition is skewed to acidic residues. Residue Ser-854 is modified to Phosphoserine; by PLK2. A Ras-GEF domain is found at 1009–1241 (SAMEIAEQLT…YEASLRIEPK (233 aa)).

In terms of assembly, homooligomer and heterooligomer with RASGRF2. Interacts with USP8, thereby regulating its stability. Phosphorylated by PLK2, leading to ubiquitination and degradation by the proteasome. In terms of processing, ubiquitinated and degraded following phosphorylation by PLK2. Post-translationally, phosphorylated by SRC and LCK. Phosphorylation by LCK increases its capacity to stimulate the GDP/GTP exchange on Ras, whereas its phosphorylation by SRC seems not to have an effect on stimulation activity.

Functionally, promotes the exchange of Ras-bound GDP by GTP. The chain is Ras-specific guanine nucleotide-releasing factor 1 (Rasgrf1) from Rattus norvegicus (Rat).